The chain runs to 607 residues: CUB and zona pellucida-like domain-containing protein 1 (607 aa).

The N-terminal stretch at 1-19 (MEVTGRLFIWAILAVSCGA) is a signal peptide. Cysteine 17 and cysteine 58 form a disulfide bridge. 2 consecutive CUB domains span residues 20–146 (QLNS…YFFS) and 154–265 (CGGD…YTSI). The Lumenal portion of the chain corresponds to 20 to 568 (QLNSTEAEGK…AEISNQPLSR (549 aa)). Asparagine 22, asparagine 57, and asparagine 67 each carry an N-linked (GlcNAc...) asparagine glycan. 3 disulfide bridges follow: cysteine 85/cysteine 107, cysteine 154/cysteine 180, and cysteine 207/cysteine 229. The 244-residue stretch at 276–519 (SCVSDKMRVI…SRCNQGCVPR (244 aa)) folds into the ZP domain. The N-linked (GlcNAc...) asparagine glycan is linked to asparagine 419. Cysteines 442 and 498 form a disulfide. Residues 569–589 (LYLFSFMVLALNVVIVAITTV) traverse the membrane as a helical segment. Topologically, residues 590–607 (KHFLNRWMDHRYQKLQVY) are cytoplasmic.

As to expression, highly expressed in pancreatic acinar cells. Also expressed in epithelium of the uterus during late pregnancy but not detected in non-pregnant uterus or in a variety of other adult and fetal tissues.

It is found in the zymogen granule membrane. Localized to zymogen granules, where it functions in trypsinogen activation. May indirectly regulate cell motility, cell-cell and cell/extracellular matrix interactions. The sequence is that of CUB and zona pellucida-like domain-containing protein 1 from Mus musculus (Mouse).